Consider the following 653-residue polypeptide: Fructose-1,6-bisphosphatase class 3 (653 aa).

This sequence belongs to the FBPase class 3 family. Requires Mn(2+) as cofactor.

It carries out the reaction beta-D-fructose 1,6-bisphosphate + H2O = beta-D-fructose 6-phosphate + phosphate. Its pathway is carbohydrate biosynthesis; gluconeogenesis. The chain is Fructose-1,6-bisphosphatase class 3 from Listeria innocua serovar 6a (strain ATCC BAA-680 / CLIP 11262).